The following is a 563-amino-acid chain: Adenine deaminase (563 aa).

This sequence belongs to the metallo-dependent hydrolases superfamily. Adenine deaminase family. Mn(2+) is required as a cofactor.

The enzyme catalyses adenine + H2O + H(+) = hypoxanthine + NH4(+). The sequence is that of Adenine deaminase from Brucella anthropi (strain ATCC 49188 / DSM 6882 / CCUG 24695 / JCM 21032 / LMG 3331 / NBRC 15819 / NCTC 12168 / Alc 37) (Ochrobactrum anthropi).